A 508-amino-acid polypeptide reads, in one-letter code: Protein phosphatase PP2A regulatory subunit B (508 aa).

WD repeat units follow at residues 19-58, 81-122, 166-204, 215-255, 274-312, and 329-370; these read TEAD…KKQS, EIEE…IKLV, AHAY…QSFN, ELTE…LCDS, EITS…KPIK, and ENDA…GNDD. A disordered region spans residues 369-466; that stretch reads DDKPKFKSAF…MRRRMTSGVG (98 aa). The span at 396 to 418 shows a compositional bias: acidic residues; the sequence is DDDDDDDDDDDDEEADDEFDEEV. Residues 447–461 show a composition bias toward basic residues; that stretch reads FKSKKSGQHPMRRRM. A WD 7 repeat occupies 477–507; the sequence is DFKKSILHLSWHPRENSVAIAATNNLYIFST.

It belongs to the phosphatase 2A regulatory subunit B family. PP2A exists in several trimeric forms, all of which consist of a core composed of a catalytic subunit associated with a 65 kDa (PR65) (Subunit A) and a 55 kDa (PR55) (Subunit B) regulatory subunit.

Functionally, phosphatase 2A affects a variety of biological processes in the cell such as transcription, cell cycle progression and cellular morphogenesis, and provides an initial identification of critical substrates for this phosphatase. The regulatory subunit may direct the catalytic subunit to distinct, albeit overlapping, subsets of substrates. The chain is Protein phosphatase PP2A regulatory subunit B (CDC55) from Candida tropicalis (Yeast).